The primary structure comprises 439 residues: Choline monooxygenase, chloroplastic (439 aa).

Residues 1-60 (MMAASASATTMLLKYPTTVCGIPNPSSNNNNDPSNNIVSIPQNTTNPTLKSRTPNKITTN) constitute a chloroplast transit peptide. Low complexity predominate over residues 24–41 (NPSSNNNNDPSNNIVSIP). The disordered stretch occupies residues 24 to 54 (NPSSNNNNDPSNNIVSIPQNTTNPTLKSRTP). Positions 42–54 (QNTTNPTLKSRTP) are enriched in polar residues. In terms of domain architecture, Rieske spans 120-227 (WQVAGISDQI…VAVWGPFVLI (108 aa)). 4 residues coordinate [2Fe-2S] cluster: Cys162, His164, Cys181, and His184. Residues His287 and His292 each coordinate Fe cation.

As to quaternary structure, homotrimer or homodimer. Requires [2Fe-2S] cluster as cofactor. Fe cation is required as a cofactor. The cofactor is Mg(2+). In terms of tissue distribution, expressed in leaves.

It localises to the plastid. It is found in the chloroplast stroma. The enzyme catalyses choline + 2 reduced [2Fe-2S]-[ferredoxin] + O2 + 2 H(+) = betaine aldehyde hydrate + 2 oxidized [2Fe-2S]-[ferredoxin] + H2O. The protein operates within amine and polyamine biosynthesis; betaine biosynthesis via choline pathway; betaine aldehyde from choline (monooxygenase route): step 1/1. In terms of biological role, catalyzes the first step of the osmoprotectant glycine betaine synthesis. The protein is Choline monooxygenase, chloroplastic (CMO) of Spinacia oleracea (Spinach).